The sequence spans 404 residues: RNA exonuclease 3 (404 aa).

An Exonuclease domain is found at 243–389 (VLSLDCEMAF…QDAIATMDVV (147 aa)).

Belongs to the REXO1/REXO3 family.

It is found in the cytoplasm. The protein resides in the nucleus. 3' to 5' exoribonuclease required for proper 3' end maturation of MRP RNA and of the U5L snRNA. This chain is RNA exonuclease 3 (REX3), found in Saccharomyces cerevisiae (strain ATCC 204508 / S288c) (Baker's yeast).